Consider the following 381-residue polypeptide: p55-v-Fos-transforming protein (381 aa).

A bZIP domain is found at 137–200 (EEKRRIRRER…EKLEFILAAH (64 aa)). Residues 139–159 (KRRIRRERNKMAAAKCRNRRR) form a basic motif region. The segment at 165 to 193 (LQAETDQLEDKKSALQTEIANLLKEKEKL) is leucine-zipper.

The protein belongs to the bZIP family. Fos subfamily.

It is found in the host nucleus. The sequence is that of p55-v-Fos-transforming protein (V-FOS) from Mus musculus (Mouse).